A 379-amino-acid polypeptide reads, in one-letter code: MGTKGKVIKCKAAIAWEAGKPLSIEEVEVAPPKAHEVRVQINAAGLCRSDTHVINPKFEGAFLPVILGHEGAGIVESVGPGVTNVKPGDKVIPLYIPHCKKCKFCLSPLTNFCEKFCKGKNPLIEQELMEDKTSRFTCKGKSIYHFFGISAFSQYTVVKDVNLAKIDDDANLERVCLIGCGFSTGYGAAINTAKVTPGSTCAVFGLGGVGLSAIMGCKTAGASRIIAIDINSDKFAKAKALGATDCLNPRELNKPVQDVIVEMTNGGVDFAIDCAGGSEVMKATVDCATVGWGSCTFVGVNLADKGLTISPIELILGRTLKGTNFGGWDAETVPKLVSDYKNGKFDLDALVTHTLPFDKINEALNLLDQGKSIRTVLIF.

The Zn(2+) site is built by Cys47, His69, Cys99, Cys102, Cys105, Cys113, and Cys176. NAD(+) contacts are provided by residues 205 to 210 (GLGGVG), Asp229, Lys234, 298 to 300 (VGV), and Arg374.

Belongs to the zinc-containing alcohol dehydrogenase family. Class-II subfamily. Homodimer. Requires Zn(2+) as cofactor.

It localises to the cytoplasm. The catalysed reaction is a primary alcohol + NAD(+) = an aldehyde + NADH + H(+). The enzyme catalyses a secondary alcohol + NAD(+) = a ketone + NADH + H(+). In Oryctolagus cuniculus (Rabbit), this protein is Alcohol dehydrogenase class-2 isozyme 1 (ADH2-1).